The primary structure comprises 792 residues: Phenylalanine--tRNA ligase beta subunit (792 aa).

Residues 39–147 (GESLGQVVVA…DDAPVGQALA (109 aa)) enclose the tRNA-binding domain. A B5 domain is found at 400–475 (PQPARILLRR…RIHGYDRVPT (76 aa)). Mg(2+) contacts are provided by aspartate 453, aspartate 459, glutamate 462, and aspartate 463. One can recognise an FDX-ACB domain in the interval 698-791 (SRFPSVRRDL…IEREHRARIR (94 aa)).

This sequence belongs to the phenylalanyl-tRNA synthetase beta subunit family. Type 1 subfamily. Tetramer of two alpha and two beta subunits. Mg(2+) serves as cofactor.

It localises to the cytoplasm. It carries out the reaction tRNA(Phe) + L-phenylalanine + ATP = L-phenylalanyl-tRNA(Phe) + AMP + diphosphate + H(+). This Xanthomonas oryzae pv. oryzae (strain MAFF 311018) protein is Phenylalanine--tRNA ligase beta subunit.